A 615-amino-acid chain; its full sequence is Sodium-dependent dopamine transporter (615 aa).

Positions 1 to 39 (MQLVPTDDPDEKIGRTSNGMQNATLPIDGPVNTEPKDPA) are disordered. Over 1-46 (MQLVPTDDPDEKIGRTSNGMQNATLPIDGPVNTEPKDPAREQWSGK) the chain is Cytoplasmic. A compositionally biased stretch (polar residues) spans 15-24 (RTSNGMQNAT). A helical transmembrane segment spans residues 47–72 (LDFLLSVVGFAVDLGNIWRFPYLCFK). Glycine 55, alanine 57, valine 58, and asparagine 62 together coordinate Na(+). Residues 73-76 (NGGG) lie on the Extracellular side of the membrane. The helical transmembrane segment at 77-100 (VFLIPYSIMVLLTGVPLFYMELCL) threads the bilayer. Residues 101–120 (GQYYRKGAITTWGRICPLFK) are Cytoplasmic-facing. A helical membrane pass occupies residues 121–151 (GIGYCVILTAFYVDFFYNVILAWGLHYLYTS). At 152-229 (FSFNLPWASC…IRSVTDLGNV (78 aa)) the chain is on the extracellular side. A disulfide bridge links cysteine 161 with cysteine 170. N-linked (GlcNAc...) asparagine glycans are attached at residues asparagine 162 and asparagine 187. A helical transmembrane segment spans residues 230 to 250 (RWDIALSLFVVYLICYFSMWK). The Cytoplasmic portion of the chain corresponds to 251-253 (GIH). Residues 254-278 (TSGKVVWFTALFPYVVLGILFIRGV) form a helical membrane-spanning segment. Topologically, residues 279 to 302 (TLPGWQNGIEYYLRPNFEMLKRPS) are extracellular. Residues 303-328 (VWQDAATQVFFSLGPGFGVLMAYSSY) form a helical membrane-spanning segment. Residue serine 314 participates in Na(+) binding. Residues 329-334 (NDFHNN) lie on the Cytoplasmic side of the membrane. A helical membrane pass occupies residues 335 to 358 (VYVDALFTSFINCATSFLSGFVIF). A Na(+)-binding site is contributed by asparagine 346. At 359 to 398 (SVLGYMSCKSGKPIEAVAQEGPGLVFVVYPEALSTMPYAP) the chain is on the extracellular side. A helical membrane pass occupies residues 399 to 424 (FWSVLFFLMLMTLGLDSSFGGSEAII). Leucine 411, aspartate 414, and serine 415 together coordinate Na(+). Topologically, residues 425-439 (TGLSDEFPILKKNRE) are cytoplasmic. A helical transmembrane segment spans residues 440 to 460 (VFVGCLFAFYMVIGIAMCTEG). A topological domain (extracellular) is located at residue glycine 461. The helical transmembrane segment at 462–488 (ILIMEWLIIYGTTWGLLIAVFCEAMVI) threads the bilayer. The Cytoplasmic segment spans residues 489-518 (AYIYGLRQFVHDVKEMMGFRPGNYWKFCWS). Residues 519–541 (CAAPFILLSMITSNFINYQALTY) traverse the membrane as a helical segment. Residues 542–544 (QDY) are Extracellular-facing. Residues 545-565 (TYPTAANVIGIIFALSGASFI) traverse the membrane as a helical segment. Topologically, residues 566–615 (PLVGIYKFVNARGNTISEKWQRVTMPYRKRPNQTEYIPIPTTQPHSDIML) are cytoplasmic.

It belongs to the sodium:neurotransmitter symporter (SNF) (TC 2.A.22) family.

The protein resides in the cell membrane. Dopamine transporter. Terminates the action of dopamine by its high affinity sodium-dependent reuptake into presynaptic terminals. Plays a role in the learned avoidance behavior of animals exposed to food that induces mitochondrial stress. The chain is Sodium-dependent dopamine transporter from Caenorhabditis elegans.